The following is a 329-amino-acid chain: METIHFTKVHGSQNDFFLVDEEENHITEWSDEKRANFAIKLCDRKHSLGGADGILYVTKSSEVGPIGQMRVVNSDGSIASMCGNGLRTVARYLLEKHALTDAKVETMKAILDVKKATSLGFDIPTYQVEISPVKFAAETLPMHVGVEKLFNQVIPELDAELAFSAVSVPNPHLITFVDQAVLDSNKQEKLASYLNSENPYFPDGVNVSFVKRLSDDAIYVRTFERGVGFTNACGTAMSACSLIKKMLDNNILETPLNVYNDGGRVQVTAKKDAAGEISLQLIGNATFVSKGSVRYENDIVTELTNEATAEQAQYQALVKEVKEFLKTTE.

Substrate-binding residues include N14 and N73. C82 acts as the Proton donor in catalysis. Residues 83–84 (GN), N170, N206, and 224–225 (ER) contribute to the substrate site. Catalysis depends on C233, which acts as the Proton acceptor. Substrate is bound at residue 234–235 (GT).

It belongs to the diaminopimelate epimerase family. As to quaternary structure, homodimer.

The protein localises to the cytoplasm. The catalysed reaction is (2S,6S)-2,6-diaminopimelate = meso-2,6-diaminopimelate. It functions in the pathway amino-acid biosynthesis; L-lysine biosynthesis via DAP pathway; DL-2,6-diaminopimelate from LL-2,6-diaminopimelate: step 1/1. In terms of biological role, catalyzes the stereoinversion of LL-2,6-diaminopimelate (L,L-DAP) to meso-diaminopimelate (meso-DAP), a precursor of L-lysine and an essential component of the bacterial peptidoglycan. This Listeria monocytogenes serotype 4b (strain F2365) protein is Diaminopimelate epimerase.